The primary structure comprises 328 residues: Probable cell division protein WhiA (328 aa).

Residues 275–308 (SLEELGQLHDPVLTKDAIAGRIRRLLAMADKRAE) constitute a DNA-binding region (H-T-H motif).

It belongs to the WhiA family.

Involved in cell division and chromosome segregation. The protein is Probable cell division protein WhiA of Nocardioides sp. (strain ATCC BAA-499 / JS614).